A 440-amino-acid polypeptide reads, in one-letter code: Ribosomal protein uS12 methylthiotransferase RimO (440 aa).

An MTTase N-terminal domain is found at Pro-6–Pro-116. Residues Cys-15, Cys-51, Cys-80, Cys-149, Cys-153, and Cys-156 each coordinate [4Fe-4S] cluster. The region spanning Leu-135–Arg-374 is the Radical SAM core domain. Residues Gln-376–Val-440 enclose the TRAM domain.

It belongs to the methylthiotransferase family. RimO subfamily. Requires [4Fe-4S] cluster as cofactor.

It is found in the cytoplasm. The enzyme catalyses L-aspartate(89)-[ribosomal protein uS12]-hydrogen + (sulfur carrier)-SH + AH2 + 2 S-adenosyl-L-methionine = 3-methylsulfanyl-L-aspartate(89)-[ribosomal protein uS12]-hydrogen + (sulfur carrier)-H + 5'-deoxyadenosine + L-methionine + A + S-adenosyl-L-homocysteine + 2 H(+). Functionally, catalyzes the methylthiolation of an aspartic acid residue of ribosomal protein uS12. The chain is Ribosomal protein uS12 methylthiotransferase RimO from Ectopseudomonas mendocina (strain ymp) (Pseudomonas mendocina).